The chain runs to 93 residues: Small ribosomal subunit protein uS17 (93 aa).

This sequence belongs to the universal ribosomal protein uS17 family. As to quaternary structure, part of the 30S ribosomal subunit.

One of the primary rRNA binding proteins, it binds specifically to the 5'-end of 16S ribosomal RNA. The polypeptide is Small ribosomal subunit protein uS17 (Corynebacterium kroppenstedtii (strain DSM 44385 / JCM 11950 / CIP 105744 / CCUG 35717)).